A 343-amino-acid chain; its full sequence is Putative kinase HI_0665 (343 aa).

The active-site Proton acceptor is Asp-209.

It belongs to the HipA Ser/Thr kinase family.

This is Putative kinase HI_0665 from Haemophilus influenzae (strain ATCC 51907 / DSM 11121 / KW20 / Rd).